The primary structure comprises 236 residues: 2-C-methyl-D-erythritol 4-phosphate cytidylyltransferase (236 aa).

The protein belongs to the IspD/TarI cytidylyltransferase family. IspD subfamily. As to quaternary structure, homodimer.

The catalysed reaction is 2-C-methyl-D-erythritol 4-phosphate + CTP + H(+) = 4-CDP-2-C-methyl-D-erythritol + diphosphate. The protein operates within isoprenoid biosynthesis; isopentenyl diphosphate biosynthesis via DXP pathway; isopentenyl diphosphate from 1-deoxy-D-xylulose 5-phosphate: step 2/6. In terms of biological role, catalyzes the formation of 4-diphosphocytidyl-2-C-methyl-D-erythritol from CTP and 2-C-methyl-D-erythritol 4-phosphate (MEP). The sequence is that of 2-C-methyl-D-erythritol 4-phosphate cytidylyltransferase from Salmonella heidelberg (strain SL476).